Reading from the N-terminus, the 458-residue chain is Argininosuccinate lyase (458 aa).

It belongs to the lyase 1 family. Argininosuccinate lyase subfamily.

Its subcellular location is the cytoplasm. It carries out the reaction 2-(N(omega)-L-arginino)succinate = fumarate + L-arginine. It functions in the pathway amino-acid biosynthesis; L-arginine biosynthesis; L-arginine from L-ornithine and carbamoyl phosphate: step 3/3. The sequence is that of Argininosuccinate lyase from Geobacter sp. (strain M21).